Here is a 206-residue protein sequence, read N- to C-terminus: uncharacterized protein (206 aa).

The helical transmembrane segment at 166–186 (FYTGLSVIVGGATALALGLFF) threads the bilayer.

Its subcellular location is the membrane. This is an uncharacterized protein from Dictyostelium discoideum (Social amoeba).